Here is a 231-residue protein sequence, read N- to C-terminus: Ion-translocating oxidoreductase complex subunit E (231 aa).

6 helical membrane passes run 18 to 38 (ALVQ…ATNA), 39 to 59 (LGLG…ISTL), 63 to 83 (TPAE…VSAV), 86 to 106 (LINA…PLIV), 125 to 145 (ALSA…MFVL), and 182 to 202 (PFLL…MLAG).

This sequence belongs to the NqrDE/RnfAE family. The complex is composed of six subunits: RsxA, RsxB, RsxC, RsxD, RsxE and RsxG.

The protein localises to the cell inner membrane. Functionally, part of a membrane-bound complex that couples electron transfer with translocation of ions across the membrane. Required to maintain the reduced state of SoxR. The polypeptide is Ion-translocating oxidoreductase complex subunit E (Shigella boydii serotype 18 (strain CDC 3083-94 / BS512)).